A 383-amino-acid chain; its full sequence is Chorismate synthase (383 aa).

Residue arginine 48 coordinates NADP(+). FMN contacts are provided by residues 125-127 (RSS), glycine 286, 301-305 (HAPTS), and arginine 328. Residues 361–383 (PDRLDDNPGQYETEYHPSSPQTN) form a disordered region.

The protein belongs to the chorismate synthase family. It depends on FMNH2 as a cofactor.

It carries out the reaction 5-O-(1-carboxyvinyl)-3-phosphoshikimate = chorismate + phosphate. The protein operates within metabolic intermediate biosynthesis; chorismate biosynthesis; chorismate from D-erythrose 4-phosphate and phosphoenolpyruvate: step 7/7. Functionally, catalyzes the anti-1,4-elimination of the C-3 phosphate and the C-6 proR hydrogen from 5-enolpyruvylshikimate-3-phosphate (EPSP) to yield chorismate, which is the branch point compound that serves as the starting substrate for the three terminal pathways of aromatic amino acid biosynthesis. This reaction introduces a second double bond into the aromatic ring system. In Haloquadratum walsbyi (strain DSM 16790 / HBSQ001), this protein is Chorismate synthase.